The sequence spans 161 residues: Peroxynitrite isomerase (161 aa).

The GXWXGXG signature appears at 17–23; sequence GSWVGRG. Residue H152 coordinates heme b.

The protein belongs to the nitrobindin family. In terms of assembly, homodimer. Heme b is required as a cofactor.

It catalyses the reaction peroxynitrite = nitrate. Its pathway is nitrogen metabolism. Functionally, heme-binding protein able to scavenge peroxynitrite and to protect free L-tyrosine against peroxynitrite-mediated nitration, by acting as a peroxynitrite isomerase that converts peroxynitrite to nitrate. Therefore, this protein likely plays a role in peroxynitrite sensing and in the detoxification of reactive nitrogen and oxygen species (RNS and ROS, respectively). Is able to bind nitric oxide (NO) in vitro, but may act as a sensor of peroxynitrite levels in vivo. The sequence is that of Peroxynitrite isomerase from Mycobacterium leprae (strain TN).